A 312-amino-acid chain; its full sequence is Protein atonal (312 aa).

2 disordered regions span residues 136 to 174 (SNVG…TAAA) and 220 to 248 (NDGS…GKQI). Positions 162-174 (PSTTATSTPTAAA) are enriched in low complexity. The 53-residue stretch at 255–307 (KRRLAANARERRRMQNLNQAFDRLRQYLPCLGNDRQLSKHETLQMAQTYISAL) folds into the bHLH domain.

Efficient DNA binding requires dimerization with another bHLH protein. Forms a heterodimer with Daughterless. As to expression, proneural clusters and sense organ precursors of the chordotonal organs, optic furrow of the eye-antennal disk and developing brain lobe.

The protein localises to the nucleus. Functionally, developmental protein involved in neurogenesis. Required for the formation of chordotonal organs and photoreceptors. Seems to bind to E boxes. Specifically required for the photoreceptor R8 selection. In Drosophila melanogaster (Fruit fly), this protein is Protein atonal (ato).